A 575-amino-acid polypeptide reads, in one-letter code: Epsin-1 (575 aa).

A 1,2-diacyl-sn-glycero-3-phospho-(1D-myo-inositol-4,5-bisphosphate)-binding residues include arginine 8, lysine 11, arginine 25, asparagine 30, arginine 63, and histidine 73. In terms of domain architecture, ENTH spans 12–144 (NIVHNYSEAE…RDEDRLREER (133 aa)). Residues 149–186 (KTKEKLAQTATASSAAVGSGPPPEAEQAWPQSSGEEEL) form a disordered region. A compositionally biased stretch (low complexity) spans 157–167 (TATASSAAVGS). UIM domains are found at residues 183–202 (EEEL…ADQP), 208–227 (EDDV…HDKE), and 233–252 (GDDL…TGGK). Disordered regions lie at residues 264–283 (FTTP…ASVP) and 293–575 (SDPW…PFLL). A run of 8 repeats spans residues 274 to 276 (DPW), 294 to 296 (DPW), 306 to 308 (DPW), 319 to 321 (DPW), 332 to 334 (DPW), 349 to 351 (DPW), 367 to 369 (DPW), and 377 to 379 (DPW). Residues 274–379 (DPWGGPASVP…APAPAFSDPW (106 aa)) form an 8 X 3 AA repeats of D-P-W region. The segment covering 306-316 (DPWGGAAPTPA) has biased composition (low complexity). Residues 333–346 (PWGGTPAPAAGEGP) show a composition bias toward low complexity. Residues 367–379 (DPWAPAPAFSDPW) are compositionally biased toward low complexity. Serine 382 is subject to Phosphoserine. Residues 401–410 (DEFSDFDRLR) carry the [DE]-X(1,2)-F-X-X-[FL]-X-X-X-R motif motif. Residues serine 418 and serine 419 each carry the phosphoserine modification. At threonine 420 the chain carries Phosphothreonine. Serine 434, serine 446, and serine 453 each carry phosphoserine. The span at 453 to 467 (SPPPAATPTPTPPTR) shows a compositional bias: pro residues. Residues threonine 459, threonine 463, and threonine 469 each carry the phosphothreonine modification. Serine 472 carries the phosphoserine modification. Threonine 493 bears the Phosphothreonine mark. Tandem repeats lie at residues 501 to 503 (NPF) and 517 to 519 (NPF). Positions 501–573 (NPFLPSGAPA…GPPAPNTNPF (73 aa)) are 3 X 3 AA repeats of N-P-F. At arginine 533 the chain carries Omega-N-methylarginine. Over residues 556 to 569 (GLPPMMPPGPPAPN) the composition is skewed to pro residues. Repeat 3 spans residues 571–573 (NPF).

Belongs to the epsin family. Monomer. Binds ITSN1. Binds clathrin, ZBTB16/ZNF145, AP2A1 and AP2A2. Binds ubiquitinated proteins. Interacts with RALBP1 in a complex also containing NUMB and TFAP2A during interphase and mitosis. Interacts with AP2B1. Interacts with UBQLN2. Interacts with REPS2; the interaction is direct. Interacts with EPS15; the interaction is direct. Interacts with ENTREP1. Post-translationally, ubiquitinated. Phosphorylated on serine and/or threonine residues in mitotic cells. Phosphorylation reduces interaction with REPS2, AP-2 and the membrane fraction. Depolarization of synaptosomes results in dephosphorylation. Ubiquitously expressed. Detected in liver, spleen and testis, and weakly in lung and thymus (at protein level).

It is found in the cytoplasm. It localises to the cell membrane. The protein localises to the nucleus. The protein resides in the membrane. Its subcellular location is the clathrin-coated pit. In terms of biological role, binds to membranes enriched in phosphatidylinositol 4,5-bisphosphate (PtdIns(4,5)P2). Modifies membrane curvature and facilitates the formation of clathrin-coated invaginations. Regulates receptor-mediated endocytosis. In Rattus norvegicus (Rat), this protein is Epsin-1 (Epn1).